Here is a 427-residue protein sequence, read N- to C-terminus: Gamma-glutamyl phosphate reductase (427 aa).

This sequence belongs to the gamma-glutamyl phosphate reductase family.

The protein localises to the cytoplasm. The catalysed reaction is L-glutamate 5-semialdehyde + phosphate + NADP(+) = L-glutamyl 5-phosphate + NADPH + H(+). It functions in the pathway amino-acid biosynthesis; L-proline biosynthesis; L-glutamate 5-semialdehyde from L-glutamate: step 2/2. In terms of biological role, catalyzes the NADPH-dependent reduction of L-glutamate 5-phosphate into L-glutamate 5-semialdehyde and phosphate. The product spontaneously undergoes cyclization to form 1-pyrroline-5-carboxylate. The sequence is that of Gamma-glutamyl phosphate reductase from Brucella ovis (strain ATCC 25840 / 63/290 / NCTC 10512).